The following is a 309-amino-acid chain: Protein FdhE homolog (309 aa).

Belongs to the FdhE family.

It is found in the cytoplasm. Necessary for formate dehydrogenase activity. The sequence is that of Protein FdhE homolog from Citrobacter koseri (strain ATCC BAA-895 / CDC 4225-83 / SGSC4696).